The following is a 158-amino-acid chain: S-ribosylhomocysteine lyase (158 aa).

Fe cation contacts are provided by H54, H58, and C124.

The protein belongs to the LuxS family. In terms of assembly, homodimer. It depends on Fe cation as a cofactor.

It carries out the reaction S-(5-deoxy-D-ribos-5-yl)-L-homocysteine = (S)-4,5-dihydroxypentane-2,3-dione + L-homocysteine. In terms of biological role, involved in the synthesis of autoinducer 2 (AI-2) which is secreted by bacteria and is used to communicate both the cell density and the metabolic potential of the environment. The regulation of gene expression in response to changes in cell density is called quorum sensing. Catalyzes the transformation of S-ribosylhomocysteine (RHC) to homocysteine (HC) and 4,5-dihydroxy-2,3-pentadione (DPD). The chain is S-ribosylhomocysteine lyase from Lactiplantibacillus plantarum (strain ATCC BAA-793 / NCIMB 8826 / WCFS1) (Lactobacillus plantarum).